The sequence spans 317 residues: Olfactory receptor 51Q1 (317 aa).

Topologically, residues 1–27 are extracellular; sequence MSQVTNTTQEGIYFILTDIPGFEASHI. Residue Asn6 is glycosylated (N-linked (GlcNAc...) asparagine). The chain crosses the membrane as a helical span at residues 28-48; the sequence is WISIPVCCLYTISIMGNTTIL. Topologically, residues 49–56 are cytoplasmic; it reads TVIRTEPS. Residues 57 to 77 form a helical membrane-spanning segment; sequence VHQRMYLFLSMLALTDLGLTL. The Extracellular segment spans residues 78-101; that stretch reads TTLPTVMQLLWFNVRRISSEACFA. Cys99 and Cys191 are joined by a disulfide. Residues 102–122 form a helical membrane-spanning segment; sequence QFFFLHGFSFMESSVLLAMSV. The Cytoplasmic segment spans residues 123–141; it reads DCYVAICCPLHYASILTNE. Residues 142 to 162 form a helical membrane-spanning segment; the sequence is VIGRTGLAIICCCVLAVLPSL. The Extracellular segment spans residues 163-198; that stretch reads FLLKRLPFCHSHLLSRSYCLHQDMIRLVCADIRLNS. Residues 199 to 219 form a helical membrane-spanning segment; sequence WYGFALALLIIIVDPLLIVIS. Topologically, residues 220–239 are cytoplasmic; it reads YTLILKNILGTATWAERLRA. Residues 240–260 traverse the membrane as a helical segment; the sequence is LNNCLSHILAVLVLYIPMVGV. The Extracellular portion of the chain corresponds to 261-275; the sequence is SMTHRFAKHASPLVH. A helical transmembrane segment spans residues 276–296; sequence VIMANIYLLAPPVMNPIIYSV. The Cytoplasmic portion of the chain corresponds to 297-317; it reads KNKQIQWGMLNFLSLKNMHSR.

It belongs to the G-protein coupled receptor 1 family.

Its subcellular location is the cell membrane. Odorant receptor. In Homo sapiens (Human), this protein is Olfactory receptor 51Q1 (OR51Q1).